Consider the following 293-residue polypeptide: Elongation factor Ts (293 aa).

The involved in Mg(2+) ion dislocation from EF-Tu stretch occupies residues 81 to 84 (TDFV).

It belongs to the EF-Ts family.

It localises to the cytoplasm. Functionally, associates with the EF-Tu.GDP complex and induces the exchange of GDP to GTP. It remains bound to the aminoacyl-tRNA.EF-Tu.GTP complex up to the GTP hydrolysis stage on the ribosome. In Teredinibacter turnerae (strain ATCC 39867 / T7901), this protein is Elongation factor Ts.